A 226-amino-acid polypeptide reads, in one-letter code: Transmembrane 4 L6 family member 20 (226 aa).

The Lumenal segment spans residues 1 to 14 (MTCCEGWTSCNGFS). The helical transmembrane segment at 15–35 (LLILILLGVVINCIPLGISLV) threads the bilayer. The Cytoplasmic portion of the chain corresponds to 36–49 (EADSTSQNPISCYE). The chain crosses the membrane as a helical span at residues 50–70 (WWFPGIIGAGLMAIPATTMSL). Residues 71–83 (AARKRACCNNKTG) are Lumenal-facing. Residues 84 to 104 (MFLSSLFSVITVVGAVYCMLV) traverse the membrane as a helical segment. Residues 105–191 (SLQALLEGPL…RIFHFSVFMS (87 aa)) are Cytoplasmic-facing. The chain crosses the membrane as a helical span at residues 192-212 (LLLVGILELLFGLSQILIGFL). Residues 213-226 (GCLCGVSQRRSQIV) lie on the Lumenal side of the membrane.

It belongs to the L6 tetraspanin family. Post-translationally, glycosylated at Asn-132, Asn-148 and Asn-163 in presence of ceramide which inverts the orientation of TM4SF20 in membranes exposing these residues to the endoplasmic reticulum lumen. In terms of processing, cleaved by signal peptidase at Ser-14 but the peptide does not act as a signal peptide. Cleavage is inhibited by ceramide which inverts the orientation of TM4SF20 in membranes exposing the N-terminus to the cytosol and not to the endoplasmic reticulum lumen.

The protein resides in the membrane. Its subcellular location is the endoplasmic reticulum membrane. Its function is as follows. Polytopic transmembrane protein. Inhibits regulated intramembrane proteolysis (RIP) of CREB3L1, inhibiting its activation and the induction of collagen synthesis. In response to ceramide, which alters TM4SF20 membrane topology, stimulates RIP activation of CREB3L1. Ceramide reverses the direction through which transmembrane helices are translocated into the endoplasmic reticulum membrane during translation of TM4SF20, this mechanism is called 'regulated alternative translocation' (RAT) and regulates the function of the transmembrane protein. The protein is Transmembrane 4 L6 family member 20 (Tm4sf20) of Mus musculus (Mouse).